A 293-amino-acid polypeptide reads, in one-letter code: Probable endoribonuclease YicC (293 aa).

Belongs to the YicC/YloC family. A divalent metal cation serves as cofactor.

In terms of biological role, negatively modulates sporulation, probably in response to nutrient conditions. Effects expression of sporulation regulator spo0A in an indirect manner, possibly via repression of the sinRR' operon. Its function is as follows. Probably a ssRNA endonuclease. Might contribute to small RNA (sRNA) regulation. The protein is Probable endoribonuclease YicC of Clostridioides difficile (strain 630) (Peptoclostridium difficile).